The sequence spans 778 residues: Aerobic respiration control sensor protein ArcB (778 aa).

Residues 1 to 25 (MKQIRLLAQYYVDLMMKLGLVRFSM) lie on the Cytoplasmic side of the membrane. Residues 26-46 (LLALALVVLAIVVQMAVTMVL) traverse the membrane as a helical segment. Topologically, residues 47–57 (HGQVESIDVIR) are periplasmic. Residues 58 to 78 (SIFFGLLITPWAVYFLSVVVE) form a helical membrane-spanning segment. At 79-778 (QLEESRQRLS…KAWVAKATKK (700 aa)) the chain is on the cytoplasmic side. In terms of domain architecture, PAS spans 153–223 (QSSFLRSFLD…ETDEKVFRHN (71 aa)). The PAC domain maps to 226-278 (LTYEQWLDYPDGRKACFEIRKVPYYDRVGKRHGLMGFGRDITERKRYQDALER). Residues 289 to 507 (TISHELRTPL…TFTLTIHAPS (219 aa)) form the Histidine kinase domain. Position 292 is a phosphohistidine; by autocatalysis (His292). One can recognise a Response regulatory domain in the interval 527–643 (NVLLVEDIEL…ALTAMIKKFW (117 aa)). Asp576 carries the 4-aspartylphosphate modification. The region spanning 678 to 771 (GPKLITDGLA…RHDVEVLKAW (94 aa)) is the HPt domain. Residue His717 is modified to Phosphohistidine.

Activation requires a sequential transfer of a phosphate group from a His in the primary transmitter domain, to an Asp in the receiver domain and to a His in the secondary transmitter domain.

Its subcellular location is the cell inner membrane. It catalyses the reaction ATP + protein L-histidine = ADP + protein N-phospho-L-histidine.. Member of the two-component regulatory system ArcB/ArcA. Sensor-regulator protein for anaerobic repression of the arc modulon. Activates ArcA via a four-step phosphorelay. ArcB can also dephosphorylate ArcA by a reverse phosphorelay involving His-717 and Asp-576. The chain is Aerobic respiration control sensor protein ArcB (arcB) from Escherichia coli (strain K12).